Consider the following 191-residue polypeptide: Orotate phosphoribosyltransferase (191 aa).

5-phospho-alpha-D-ribose 1-diphosphate is bound at residue 114–122; it reads EDVITTGGS. Orotate is bound by residues Thr-118 and Arg-146.

It belongs to the purine/pyrimidine phosphoribosyltransferase family. PyrE subfamily. Homodimer. The cofactor is Mg(2+).

It carries out the reaction orotidine 5'-phosphate + diphosphate = orotate + 5-phospho-alpha-D-ribose 1-diphosphate. The protein operates within pyrimidine metabolism; UMP biosynthesis via de novo pathway; UMP from orotate: step 1/2. Catalyzes the transfer of a ribosyl phosphate group from 5-phosphoribose 1-diphosphate to orotate, leading to the formation of orotidine monophosphate (OMP). This is Orotate phosphoribosyltransferase from Desulforamulus reducens (strain ATCC BAA-1160 / DSM 100696 / MI-1) (Desulfotomaculum reducens).